The sequence spans 485 residues: MSGMGEKSEQISKSARSTDPQEQESVALASQCVGEGRVLKIRGGVVDVFFTEHIPRIHDLVYAGDLAMEVAALLDQGTVRCIALTPVRGLGLGMPVHATGAPIQVPVGEAVLGRMLNVFGEPIDGKPAPNATISRSIHQAPPVLEERVVHSTILETGIKAIDLLSPIERGGKTGLFGGAGVGKTVLITELINNTAQHHKGVSLFCGIGERSREAEELYREMGEAGVRDKTVMLFGQMSEAPGVRFLVGKTALTMAEYFRDDLGQDVLLLIDNVFRFVQAGSEVSGLLGRMPSRVGYQPTLATELASLQERITSTRKGAITSIQAVYVPADDFTDPAAAHIFSHLSASVVLSRKRASEGLYPAVDPLASTSVMLTPAVVGQRHYDIARAVRRTLAEYEELRDIIAMLGLEELSAADRTVVARARRLERFLTQPFFSAESFSGEIGARVSVAETLAGCERILQQTKFADDEIDYYMIGALPEQKTAV.

Residues 1–10 show a composition bias toward basic and acidic residues; the sequence is MSGMGEKSEQ. Positions 1–27 are disordered; sequence MSGMGEKSEQISKSARSTDPQEQESVA. Residues 11–24 show a composition bias toward polar residues; that stretch reads ISKSARSTDPQEQE. 177-184 provides a ligand contact to ATP; it reads GGAGVGKT.

The protein belongs to the ATPase alpha/beta chains family. F-type ATPases have 2 components, CF(1) - the catalytic core - and CF(0) - the membrane proton channel. CF(1) has five subunits: alpha(3), beta(3), gamma(1), delta(1), epsilon(1). CF(0) has three main subunits: a(1), b(2) and c(9-12). The alpha and beta chains form an alternating ring which encloses part of the gamma chain. CF(1) is attached to CF(0) by a central stalk formed by the gamma and epsilon chains, while a peripheral stalk is formed by the delta and b chains.

The protein resides in the cell inner membrane. The catalysed reaction is ATP + H2O + 4 H(+)(in) = ADP + phosphate + 5 H(+)(out). Produces ATP from ADP in the presence of a proton gradient across the membrane. The catalytic sites are hosted primarily by the beta subunits. The polypeptide is ATP synthase subunit beta 2 (Nitrosomonas eutropha (strain DSM 101675 / C91 / Nm57)).